The chain runs to 476 residues: MKFSTAVTTLISSGAIVSALPHVDVHQEDAHQHKRAVAYKYVYETVVVDSDGHTVTPAASEVATAATSAIITTSVLAPTSSAAAADSSASIAVSSAALAKNEKISDAAASATASTSQGASSSSSSSSATSTLESSSVSSSSEEAAPTSTVVSTSSATQSSASSATKSSTSSTSPSTSTSTSTSSTSSSSSSSSSSSSSSSGSGSIYGDLADFSGPSEKFQDGTIPCDKFPSGQGVISIDWIGEGGWSGVENTDTSTGGSCKEGSYCSYSCQPGMSKTQWPSDQPSDGRSVGGLLCKNGYLYRSNTDADYLCEWGVEAAYVVSKLSKGVAICRTDYPGTENMVIPTYVEGGSSLPLTVVDQDTYFTWEGKKTSAQYYVNNAGVSVEDGCIWGTSGSGIGNWAPLNFGAGSTGGVTYLSLIPNPNNSDALNYNVKIVAADDSSNVIGECVYENGEFSGGADGCTVSVTSGKAHFVLYN.

The first 19 residues, 1 to 19 (MKFSTAVTTLISSGAIVSA), serve as a signal peptide directing secretion. A compositionally biased stretch (low complexity) spans 111–203 (ATASTSQGAS…SSSSSSSGSG (93 aa)). Residues 111-214 (ATASTSQGAS…IYGDLADFSG (104 aa)) form a disordered region. N-linked (GlcNAc...) asparagine glycosylation is present at N423.

Belongs to the SUN family.

The protein localises to the secreted. Its subcellular location is the cell wall. Involved in the remodeling of the cell wall during the various phases of yeast culture development and under various environmental conditions. Required for the maintenance of the CLB5 kinase activity. In Saccharomyces cerevisiae (strain ATCC 204508 / S288c) (Baker's yeast), this protein is Probable secreted beta-glucosidase SIM1 (SIM1).